Here is an 86-residue protein sequence, read N- to C-terminus: Anti-adapter protein IraP (86 aa).

Residues Met1–Arg38 adopt a coiled-coil conformation.

This sequence belongs to the IraP family. As to quaternary structure, interacts with RssB.

The protein localises to the cytoplasm. In terms of biological role, inhibits RpoS proteolysis by regulating RssB activity, thereby increasing the stability of the sigma stress factor RpoS especially during phosphate starvation, but also in stationary phase and during nitrogen starvation. Its effect on RpoS stability is due to its interaction with RssB, which probably blocks the interaction of RssB with RpoS, and the consequent delivery of the RssB-RpoS complex to the ClpXP protein degradation pathway. This Klebsiella pneumoniae subsp. pneumoniae (strain ATCC 700721 / MGH 78578) protein is Anti-adapter protein IraP.